Here is a 570-residue protein sequence, read N- to C-terminus: Periplasmic trehalase (570 aa).

An N-terminal signal peptide occupies residues 1–34 (MIPPEIRRSVLLQKAIKLALAGTLLTFASFSATA). Substrate is bound by residues arginine 159, 166-167 (WD), asparagine 203, 212-214 (RSQ), 284-286 (RPE), and glycine 317. Residues aspartate 319 and glutamate 503 each act as proton donor/acceptor in the active site. Position 518 (glutamate 518) interacts with substrate. The segment at 544–570 (KPCDSVPSTRPASLSATPTKTPSAATQ) is disordered. Over residues 554–570 (PASLSATPTKTPSAATQ) the composition is skewed to low complexity.

Belongs to the glycosyl hydrolase 37 family. In terms of assembly, monomer.

It localises to the periplasm. It catalyses the reaction alpha,alpha-trehalose + H2O = alpha-D-glucose + beta-D-glucose. Provides the cells with the ability to utilize trehalose at high osmolarity by splitting it into glucose molecules that can subsequently be taken up by the phosphotransferase-mediated uptake system. The protein is Periplasmic trehalase of Salmonella newport (strain SL254).